A 121-amino-acid polypeptide reads, in one-letter code: Acidic phospholipase A2 PLA-1 (121 aa).

Intrachain disulfides connect Cys-26-Cys-115, Cys-28-Cys-44, Cys-43-Cys-95, Cys-49-Cys-121, Cys-50-Cys-88, Cys-57-Cys-81, and Cys-75-Cys-86. Ca(2+) contacts are provided by Tyr-27, Gly-29, and Gly-31. The active site involves His-47. Residue Asp-48 coordinates Ca(2+). Asp-89 is a catalytic residue.

The protein belongs to the phospholipase A2 family. Group II subfamily. D49 sub-subfamily. Requires Ca(2+) as cofactor. Expressed by the venom gland.

It is found in the secreted. It catalyses the reaction a 1,2-diacyl-sn-glycero-3-phosphocholine + H2O = a 1-acyl-sn-glycero-3-phosphocholine + a fatty acid + H(+). Functionally, PLA2 catalyzes the calcium-dependent hydrolysis of the 2-acyl groups in 3-sn-phosphoglycerides. The chain is Acidic phospholipase A2 PLA-1 from Eristicophis macmahoni (Leaf-nosed viper).